A 296-amino-acid chain; its full sequence is Elongation factor Ts (296 aa).

The interval 82 to 85 is involved in Mg(2+) ion dislocation from EF-Tu; sequence TDFV.

Belongs to the EF-Ts family.

The protein resides in the cytoplasm. Associates with the EF-Tu.GDP complex and induces the exchange of GDP to GTP. It remains bound to the aminoacyl-tRNA.EF-Tu.GTP complex up to the GTP hydrolysis stage on the ribosome. The polypeptide is Elongation factor Ts (Aromatoleum aromaticum (strain DSM 19018 / LMG 30748 / EbN1) (Azoarcus sp. (strain EbN1))).